Consider the following 442-residue polypeptide: Casein kinase 1-like protein 10 (442 aa).

The 270-residue stretch at 9–278 (FKLGRKIGSG…LKRLFRDLFI (270 aa)) folds into the Protein kinase domain. Residues 15 to 23 (IGSGSFGEL) and K38 each bind ATP. The active-site Proton acceptor is the D128. Disordered stretches follow at residues 299–323 (GSISKPRPNPKPALDPPGPSAERNE) and 381–421 (AVMS…LSAR). The segment covering 305-317 (RPNPKPALDPPGP) has biased composition (pro residues). Over residues 384–394 (SSSQPGSSGEL) the composition is skewed to low complexity. Residues 400–417 (SKLFSSSAQKIQPVQETK) are compositionally biased toward polar residues.

The protein belongs to the protein kinase superfamily. CK1 Ser/Thr protein kinase family. Casein kinase I subfamily. Monomer. Autophosphorylated.

The protein resides in the cytoplasm. It is found in the cell junction. It localises to the plasmodesma. It carries out the reaction L-seryl-[protein] + ATP = O-phospho-L-seryl-[protein] + ADP + H(+). The catalysed reaction is L-threonyl-[protein] + ATP = O-phospho-L-threonyl-[protein] + ADP + H(+). Its function is as follows. Casein kinases are operationally defined by their preferential utilization of acidic proteins such as caseins as substrates. It can phosphorylate a large number of proteins. The polypeptide is Casein kinase 1-like protein 10 (Arabidopsis thaliana (Mouse-ear cress)).